An 859-amino-acid chain; its full sequence is Leucine--tRNA ligase (859 aa).

The short motif at 42–52 is the 'HIGH' region element; that stretch reads PYPSGRLHMGH. The 'KMSKS' region motif lies at 618 to 622; that stretch reads KMSKS. Lysine 621 contacts ATP.

This sequence belongs to the class-I aminoacyl-tRNA synthetase family.

It localises to the cytoplasm. It catalyses the reaction tRNA(Leu) + L-leucine + ATP = L-leucyl-tRNA(Leu) + AMP + diphosphate. The polypeptide is Leucine--tRNA ligase (Shewanella baltica (strain OS195)).